A 343-amino-acid chain; its full sequence is Methionine import ATP-binding protein MetN 1 (343 aa).

An ABC transporter domain is found at isoleucine 2 to isoleucine 241. Glycine 38–serine 45 provides a ligand contact to ATP.

The protein belongs to the ABC transporter superfamily. Methionine importer (TC 3.A.1.24) family. As to quaternary structure, the complex is composed of two ATP-binding proteins (MetN), two transmembrane proteins (MetI) and a solute-binding protein (MetQ).

It is found in the cell inner membrane. The enzyme catalyses L-methionine(out) + ATP + H2O = L-methionine(in) + ADP + phosphate + H(+). The catalysed reaction is D-methionine(out) + ATP + H2O = D-methionine(in) + ADP + phosphate + H(+). Functionally, part of the ABC transporter complex MetNIQ involved in methionine import. Responsible for energy coupling to the transport system. This chain is Methionine import ATP-binding protein MetN 1, found in Salmonella typhimurium (strain LT2 / SGSC1412 / ATCC 700720).